The primary structure comprises 141 residues: Hemoglobin subunit alpha-1/2 (141 aa).

The 141-residue stretch at 1 to 141 (VLSAABKSBV…VSTVLTSKYR (141 aa)) folds into the Globin domain. Serine 3 bears the Phosphoserine mark. N6-succinyllysine occurs at positions 7 and 11. An N6-acetyllysine; alternate modification is found at lysine 16. At lysine 16 the chain carries N6-succinyllysine; alternate. At tyrosine 24 the chain carries Phosphotyrosine. At serine 35 the chain carries Phosphoserine. N6-succinyllysine is present on lysine 40. Serine 49 carries the phosphoserine modification. Residue histidine 58 coordinates O2. Histidine 87 contacts heme b. A Phosphoserine modification is found at serine 102. Threonine 108 carries the post-translational modification Phosphothreonine. A Phosphoserine modification is found at serine 124. 2 positions are modified to phosphothreonine: threonine 134 and threonine 137. At serine 138 the chain carries Phosphoserine.

Belongs to the globin family. As to quaternary structure, heterotetramer of two alpha chains and two beta chains. In terms of tissue distribution, red blood cells.

Its function is as follows. Involved in oxygen transport from the lung to the various peripheral tissues. The chain is Hemoglobin subunit alpha-1/2 from Odocoileus virginianus virginianus (Virginia white-tailed deer).